The sequence spans 378 residues: UPF0754 membrane protein BCG9842_B4423 (378 aa).

Residues 357–377 form a helical membrane-spanning segment; the sequence is YLGALLGGIIGLVQGLLLLFL.

The protein belongs to the UPF0754 family.

The protein localises to the cell membrane. This Bacillus cereus (strain G9842) protein is UPF0754 membrane protein BCG9842_B4423.